Here is a 223-residue protein sequence, read N- to C-terminus: MOB-like protein phocein (223 aa).

Positions 1–23 (MTAATENRTVRRNGPGTKRADWN) are disordered. The Zn(2+) site is built by Cys92, Cys97, His169, and His174.

The protein belongs to the MOB1/phocein family.

Its subcellular location is the cytoplasm. The protein localises to the perinuclear region. It is found in the membrane. The protein resides in the golgi apparatus. It localises to the golgi stack membrane. Its function is as follows. May play a role in membrane trafficking, specifically in membrane budding reactions. The protein is MOB-like protein phocein of Caenorhabditis elegans.